We begin with the raw amino-acid sequence, 592 residues long: ATP-dependent lipid A-core flippase (592 aa).

The next 6 membrane-spanning stretches (helical) occupy residues 31–51, 76–96, 134–154, 161–181, 261–281, and 288–308; these read LSSFILAMVAMGVVAATEGII, AMLVGIAVVRGVAQFGATYFL, AVIFEVNQVLQVLTGVFITLV, LALLIFLFYTNWRLTLVVAVI, VTQFLAALALSVILAIAMVQA, and VGGFTGFVMAMLLLISPLKHL. The region spanning 35–317 is the ABC transmembrane type-1 domain; it reads ILAMVAMGVV…LTDVNQPMQR (283 aa). An ABC transporter domain is found at 349-587; it reads LRFEHVTFRY…DGLYAGLHRI (239 aa). Residue 383–390 coordinates ATP; sequence GPSGSGKT.

The protein belongs to the ABC transporter superfamily. Lipid exporter (TC 3.A.1.106) family. As to quaternary structure, homodimer.

The protein resides in the cell inner membrane. It catalyses the reaction ATP + H2O + lipid A-core oligosaccharideSide 1 = ADP + phosphate + lipid A-core oligosaccharideSide 2.. In terms of biological role, involved in lipopolysaccharide (LPS) biosynthesis. Translocates lipid A-core from the inner to the outer leaflet of the inner membrane. Transmembrane domains (TMD) form a pore in the inner membrane and the ATP-binding domain (NBD) is responsible for energy generation. The protein is ATP-dependent lipid A-core flippase of Ralstonia nicotianae (strain ATCC BAA-1114 / GMI1000) (Ralstonia solanacearum).